The following is a 373-amino-acid chain: 3 beta-hydroxysteroid dehydrogenase/Delta 5--&gt;4-isomerase (373 aa).

The Proton acceptor role is filled by Y155. K159 is a binding site for NAD(+). Residues 288–308 (IFLKYWLAFLLEIVSFLLSPI) traverse the membrane as a helical segment.

Belongs to the 3-beta-HSD family.

Its subcellular location is the endoplasmic reticulum membrane. The protein resides in the mitochondrion membrane. The enzyme catalyses a 3beta-hydroxy-Delta(5)-steroid + NAD(+) = a 3-oxo-Delta(5)-steroid + NADH + H(+). The catalysed reaction is a 3-oxo-Delta(5)-steroid = a 3-oxo-Delta(4)-steroid. It participates in lipid metabolism; steroid biosynthesis. Functionally, 3-beta-HSD is a bifunctional enzyme, that catalyzes the oxidative conversion of Delta(5)-ene-3-beta-hydroxy steroid, and the oxidative conversion of ketosteroids. The 3-beta-HSD enzymatic system plays a crucial role in the biosynthesis of all classes of hormonal steroids. The polypeptide is 3 beta-hydroxysteroid dehydrogenase/Delta 5--&gt;4-isomerase (HSD3B) (Equus caballus (Horse)).